A 247-amino-acid polypeptide reads, in one-letter code: Fasciclin-like arabinogalactan protein 6 (247 aa).

An N-terminal signal peptide occupies residues 1–23 (MSSSLFSYVVLLIFLFTIPYIQS). The 147-residue stretch at 36–182 (PINLTAILEA…LAVYVVDSVL (147 aa)) folds into the FAS1 domain. N-linked (GlcNAc...) asparagine glycosylation is found at asparagine 38, asparagine 57, asparagine 70, asparagine 142, and asparagine 153. Residues 192-212 (TTPTGAPAPKSSTSSSDADSP) show a composition bias toward low complexity. The disordered stretch occupies residues 192 to 221 (TTPTGAPAPKSSTSSSDADSPAADDEHKSA). Glycine 222 carries GPI-anchor amidated glycine lipidation. The propeptide at 223 to 247 (SSVKRTSLGIVVSFALFCCSVIYIA) is removed in mature form.

This sequence belongs to the fasciclin-like AGP family.

The protein localises to the cell membrane. Functionally, may be a cell surface adhesion protein. The polypeptide is Fasciclin-like arabinogalactan protein 6 (FLA6) (Arabidopsis thaliana (Mouse-ear cress)).